The primary structure comprises 1185 residues: Syntaxin-binding protein 5-like (1185 aa).

Met1 is subject to N-acetylmethionine. Residues 15–44 (ASSPGSGSSSGSNSGGAGSGSVHPGGTAGL) form a disordered region. Positions 16-26 (SSPGSGSSSGS) are enriched in low complexity. 10 WD repeats span residues 73–106 (TALAFDPVQKILAIGTRTGAIRILGRPGVDCYCQ), 113–152 (VLQLQFLINEGALVSASSDDTLHLWNLRQKRPAILHSLKF), 157–193 (ITYCHLPFQSKWLYVGTERGNTHIVNIESFILSGYVI), 212–246 (HLSDSPRDEGKLLIGYENGTVVFWDLKSKRAELRV), 252–284 (IHSIDWHHEGKQFMCSHSDGSLTLWNLKSPSRP), 306–348 (PILK…KAIT), 356–390 (IVEFLTLCETPYPNEFQEPYAVAVLLEKDLIVVDL), 412–489 (TCTA…YKLK), 517–628 (QMIY…DLVI), and 642–704 (TSLS…IADN). Phosphothreonine is present on Thr567. A disordered region spans residues 567 to 601 (TPEPETSPPFPDLSSQLPPSRSLSGSTNTVSSEGV). Ser573, Ser588, and Ser592 each carry phosphoserine. Residues 578-592 (DLSSQLPPSRSLSGS) are compositionally biased toward low complexity. A Phosphothreonine modification is found at Thr595. Ser598 carries the post-translational modification Phosphoserine. Position 708 is an omega-N-methylarginine (Arg708). Residues 747-768 (TSDHVNGHCTSPTSQSCSSGKR) are compositionally biased toward polar residues. The segment at 747 to 770 (TSDHVNGHCTSPTSQSCSSGKRLS) is disordered. Phosphoserine is present on residues Ser762, Ser764, Ser765, Ser770, Ser771, Ser792, Ser799, Ser811, Ser819, Ser821, and Ser822. 4 WD repeats span residues 831 to 888 (ITAL…SGTF), 897 to 968 (TFSC…QTCL), 973 to 1017 (ITET…LDVN), and 1031 to 1054 (CFTNEGQALYLVSPTEIQRLTYSQ). Thr1092 is modified (phosphothreonine). Positions 1120–1180 (SIEGMKGAAG…HELMLKYKDK (61 aa)) constitute a v-SNARE coiled-coil homology domain.

This sequence belongs to the WD repeat L(2)GL family. As to quaternary structure, interacts with STX1A and STX4. In terms of processing, phosphorylated, leading to STXBP5L increased turnover and subsequent de-repression of insulin secretion. Phosphorylated on serine residues in response to glucose or phorbol esters. Post-translationally, ubiquitinated by the E3 ligase SYVN1, leading to STXBP5L proteasomal degradation. As to expression, detected in hippocampus and cerebellum. Expressed in pancreatic beta-cells where it modulates insulin secretion.

The protein localises to the cytoplasm. It is found in the cell membrane. The protein resides in the membrane. Functionally, plays a role in vesicle trafficking and exocytosis inhibition. In pancreatic beta-cells, inhibits insulin secretion probably by interacting with and regulating STX1A and STX4, key t-SNARE proteins involved in the fusion of insulin granules to the plasma membrane. Also plays a role in neurotransmitter release by inhibiting basal acetylcholine release from axon terminals and by preventing synaptic fatigue upon repetitive stimulation. Promotes as well axonal outgrowth. This chain is Syntaxin-binding protein 5-like (Stxbp5l), found in Mus musculus (Mouse).